We begin with the raw amino-acid sequence, 308 residues long: Taste receptor type 2 member 41 (308 aa).

The Extracellular portion of the chain corresponds to 1–7 (MLPTLSV). A helical membrane pass occupies residues 8–28 (FFMLTFVLLCFLGILANGFIV). At 29–60 (LMLSREWLLRGRLLPSDMILFSLGTSRFFQQC) the chain is on the cytoplasmic side. A helical transmembrane segment spans residues 61 to 81 (VGLVNSFYYFLHLVEYSGSLA). The Extracellular segment spans residues 82–88 (RQLISLH). A helical membrane pass occupies residues 89 to 109 (WDFLNSATFWFCTWLSVLFCI). Residues 110–128 (KIANFSHPAFLWLKWRFPA) are Cytoplasmic-facing. Residues 129 to 149 (LVPWFLLGSILVSVIVTLLFF) traverse the membrane as a helical segment. Residues 150 to 186 (WGNHTIYQAFLRRKFTGNTTFKEWNRRLEIDYFMPLK) lie on the Extracellular side of the membrane. N-linked (GlcNAc...) asparagine glycosylation is found at asparagine 152 and asparagine 167. A helical transmembrane segment spans residues 187–207 (VVTMSIPCSLFLVSILLLISS). At 208 to 239 (LRRHSLRMQHNTHSLQDPNVQAHSRALKSLIS) the chain is on the cytoplasmic side. The helical transmembrane segment at 240–260 (FLVLYAVSFVSMIIDATVFIS) threads the bilayer. At 261–264 (SDNV) the chain is on the extracellular side. A helical membrane pass occupies residues 265–285 (WYWPWQIILYFCMSVHPFILI). The Cytoplasmic portion of the chain corresponds to 286–308 (TNNLRFRGTFRQLLLLARGFWVA).

The protein belongs to the G-protein coupled receptor T2R family. As to expression, expressed in subsets of taste receptor cells of the tongue and palate epithelium and exclusively in gustducin-positive cells.

The protein resides in the membrane. Functionally, receptor that may play a role in the perception of bitterness and is gustducin-linked. May play a role in sensing the chemical composition of the gastrointestinal content. The activity of this receptor may stimulate alpha gustducin, mediate PLC-beta-2 activation and lead to the gating of TRPM5. The sequence is that of Taste receptor type 2 member 41 (Tas2r41) from Mus musculus (Mouse).